The primary structure comprises 727 residues: Polyribonucleotide nucleotidyltransferase (727 aa).

Positions 488 and 494 each coordinate Mg(2+). Positions 555–614 (PKLYTMKINPEKIRDVIGKGGATIRALTDETGCQINIEEDGTITIAATEAAKADEAKRRI) constitute a KH domain. One can recognise an S1 motif domain in the interval 624-692 (GKVYEGPVTK…DKGRVKLSMK (69 aa)). The interval 691–727 (MKALADRPAGDSGRPAPAERGERRERRDGGASEQQQQ) is disordered. A compositionally biased stretch (basic and acidic residues) spans 707 to 720 (PAERGERRERRDGG).

Belongs to the polyribonucleotide nucleotidyltransferase family. The cofactor is Mg(2+).

It is found in the cytoplasm. It carries out the reaction RNA(n+1) + phosphate = RNA(n) + a ribonucleoside 5'-diphosphate. In terms of biological role, involved in mRNA degradation. Catalyzes the phosphorolysis of single-stranded polyribonucleotides processively in the 3'- to 5'-direction. The polypeptide is Polyribonucleotide nucleotidyltransferase (Acidovorax ebreus (strain TPSY) (Diaphorobacter sp. (strain TPSY))).